An 87-amino-acid polypeptide reads, in one-letter code: Large ribosomal subunit protein bL27 (87 aa).

A disordered region spans residues 1–21; it reads MAHKKAGGSSRNGRDSESKRL.

Belongs to the bacterial ribosomal protein bL27 family.

The chain is Large ribosomal subunit protein bL27 from Burkholderia multivorans (strain ATCC 17616 / 249).